A 417-amino-acid polypeptide reads, in one-letter code: Probable glucuronosyltransferase GUT1 (417 aa).

The Cytoplasmic portion of the chain corresponds to 1–15 (MGTRRRSARARARPP). Residues 16–36 (LAMPLAVLLLFACSSGVAAAA) form a helical; Signal-anchor for type II membrane protein membrane-spanning segment. At 37-417 (AQGIERIKDD…EGTREDLKPW (381 aa)) the chain is on the lumenal side. N-linked (GlcNAc...) asparagine glycans are attached at residues N144 and N405.

The protein belongs to the glycosyltransferase 47 family.

Its subcellular location is the golgi apparatus membrane. Involved in the synthesis of glucuronoxylan hemicellulose in secondary cell walls. The sequence is that of Probable glucuronosyltransferase GUT1 (GUT1) from Oryza sativa subsp. japonica (Rice).